The following is a 470-amino-acid chain: MPSPATTWLHVSGYRFLLRRIECALLFGDVCAATGALRARTTSLALGCVLAIVAAMGCAFVALLRPQSALGQAPIVMGRESGALYVRVDDVWHPVLNLASARLIAATNANPQPVSESELGHTKRGPLLGIPGAPQLLDQPLAGAESAWAICDSDNGGSTTVVVGPAEDSSAQVLTAEQMILVATESGSPTYLLYGGRRAVVDLADPAVVWALRLQGRVPHVVAQSLLNAVPEAPRITAPRIRGGGRASVGLPGFLVGGVVRITRASGDEYYVVLEDGVQRIGQVAADLLRFGDSQGSVNVPTVAPDVIRVAPIVNTLPVSAFPDRPPTPVDGSPGRAVTTLCVTWTPAQPGAARVAFLAGSGPPVPLGGVPVTLAQADGRGPALDAVYLPPGRSAYVAARSLSGGGTGTRYLVTDTGVRFAIHDDDVAHDLGLPTAAIPAPWPVLATLPSGPELSRANASVARDTVAPGP.

Residues 44–64 (LALGCVLAIVAAMGCAFVALL) form a helical membrane-spanning segment.

It belongs to the EccB family. In terms of assembly, part of the ESX-4 / type VII secretion system (T7SS), which is composed of cytosolic and membrane components.

The protein resides in the cell membrane. Its function is as follows. An ATPase. The chain is ESX-4 secretion system ATPase EccB4 (eccB4) from Mycobacterium tuberculosis (strain CDC 1551 / Oshkosh).